A 391-amino-acid chain; its full sequence is Transcription factor TCP3 (391 aa).

A disordered region spans residues 1–34; the sequence is MAPDNDHFLDSPSPPLLEMRHHQSATENGGGCGE. A TCP domain is found at 49–107; the sequence is RKDRHSKVCTAKGPRDRRVRLSAPTAIQFYDVQDRLGFDRPSKAVDWLITKAKSAIDDL. Disordered regions lie at residues 122 to 168, 317 to 345, and 363 to 391; these read HAAA…PASM, HHHHHHHQQSMTTDDLHHHHPYHIPPGIH, and FRIPARFQGEQEEHGGDNKPSSASSDSRH. Over residues 381–391 the composition is skewed to polar residues; the sequence is KPSSASSDSRH.

In terms of assembly, interacts with SPL. Interacts with KIN10; KIN11 and FLZ3. In terms of tissue distribution, expressed in cotyledons, particularly in the vascular region, in leaves, roots, buds, flowers and immature siliques.

The protein resides in the nucleus. Its function is as follows. Plays a pivotal role in the control of morphogenesis of shoot organs by negatively regulating the expression of boundary-specific genes such as CUC genes, probably through the induction of miRNA (e.g. miR164). Participates in ovule development. This is Transcription factor TCP3 (TCP3) from Arabidopsis thaliana (Mouse-ear cress).